We begin with the raw amino-acid sequence, 236 residues long: MLQSILRRIVKALLWFAAGSVLVVLVLRWVPPPGTALMVERKVESWFDGEPIDLQRDWEPLDKISDNLKIAVIAGEDQKFAEHWGFDVDAIQAAILHNERGGSIRGASTLSQQVSKNLFLWSGRSYLRKGLEAWFTMLIELLWSKERILEVYLNSVEWDEGVFGAQAAAQHHFRTNASALSAQQASYLAAVLPNPRQWSASHPSSYVSRRAGWIRQQMRQLGGDEYLQGLNSSRRW.

Residues 12–31 traverse the membrane as a helical segment; that stretch reads ALLWFAAGSVLVVLVLRWVP.

This sequence belongs to the glycosyltransferase 51 family.

It localises to the cell inner membrane. It catalyses the reaction [GlcNAc-(1-&gt;4)-Mur2Ac(oyl-L-Ala-gamma-D-Glu-L-Lys-D-Ala-D-Ala)](n)-di-trans,octa-cis-undecaprenyl diphosphate + beta-D-GlcNAc-(1-&gt;4)-Mur2Ac(oyl-L-Ala-gamma-D-Glu-L-Lys-D-Ala-D-Ala)-di-trans,octa-cis-undecaprenyl diphosphate = [GlcNAc-(1-&gt;4)-Mur2Ac(oyl-L-Ala-gamma-D-Glu-L-Lys-D-Ala-D-Ala)](n+1)-di-trans,octa-cis-undecaprenyl diphosphate + di-trans,octa-cis-undecaprenyl diphosphate + H(+). It functions in the pathway cell wall biogenesis; peptidoglycan biosynthesis. Peptidoglycan polymerase that catalyzes glycan chain elongation from lipid-linked precursors. The polypeptide is Biosynthetic peptidoglycan transglycosylase (Pseudomonas syringae pv. syringae (strain B728a)).